The primary structure comprises 127 residues: Fluoride-specific ion channel FluC (127 aa).

Transmembrane regions (helical) follow at residues 4 to 24 (SLLVIAIGASLGAWLRWLLGM), 37 to 57 (TVVANMVGGYIIGLAIAFLAA), 68 to 88 (LIITGFCGGLTTFSTFSAETV), and 96 to 116 (LLWALGSISLHVVGSLAMTAA). Na(+)-binding residues include G75 and T78.

It belongs to the fluoride channel Fluc/FEX (TC 1.A.43) family.

The protein resides in the cell inner membrane. It catalyses the reaction fluoride(in) = fluoride(out). With respect to regulation, na(+) is not transported, but it plays an essential structural role and its presence is essential for fluoride channel function. Fluoride-specific ion channel. Important for reducing fluoride concentration in the cell, thus reducing its toxicity. In Pseudomonas syringae pv. maculicola, this protein is Fluoride-specific ion channel FluC.